A 344-amino-acid polypeptide reads, in one-letter code: Protein RecA (344 aa).

65-72 lines the ATP pocket; that stretch reads GPESSGKT. Basic and acidic residues predominate over residues 323-337; that stretch reads ELREKFQPAEAPREA. The tract at residues 323–344 is disordered; the sequence is ELREKFQPAEAPREAGDDEDKE.

Belongs to the RecA family.

The protein localises to the cytoplasm. In terms of biological role, can catalyze the hydrolysis of ATP in the presence of single-stranded DNA, the ATP-dependent uptake of single-stranded DNA by duplex DNA, and the ATP-dependent hybridization of homologous single-stranded DNAs. It interacts with LexA causing its activation and leading to its autocatalytic cleavage. The protein is Protein RecA of Xanthomonas axonopodis pv. citri (strain 306).